Reading from the N-terminus, the 151-residue chain is FUN14 domain-containing protein 2 (151 aa).

Residues 1 to 42 are Cytoplasmic-facing; the sequence is MAANSQGNFDGKFEALDLAELTKKQPWWRKLFGQESGPSAEK. A helical membrane pass occupies residues 43-63; it reads YSVATQLVIGGVTGWCTGFVF. Residues 64–69 lie on the Mitochondrial intermembrane side of the membrane; sequence QKVGKL. Residues 70-90 traverse the membrane as a helical segment; that stretch reads AATAVGGGFFLLQLANHTGYI. Over 91–126 the chain is Cytoplasmic; it reads KVDWQRVEKDMKKAKEQLKIRKNKQIPTEVKSKAEE. Residues 127-147 traverse the membrane as a helical segment; it reads VVSFVKKNVLVTGGFFGGFLL. Residues 148–151 are Mitochondrial intermembrane-facing; it reads GMAS.

Belongs to the FUN14 family. Highly expressed in platelet (at protein level). Expressed in liver, brain, heart and muscle.

It localises to the mitochondrion outer membrane. The protein resides in the nucleus. Functionally, binds directly and specifically 1,2-Diacyl-sn-glycero-3-phospho-(1'-myo-inositol-3',4',5'-bisphosphate) (PIP3) leading to the recruitment of PIP3 to mitochondria and may play a role in the regulation of the platelet activation via AKT/GSK3B/cGMP signaling pathways. May act as transcription factor that regulates SREBP1 (isoform SREBP-1C) expression in order to modulate triglyceride (TG) homeostasis in hepatocytes. This Mus musculus (Mouse) protein is FUN14 domain-containing protein 2.